The chain runs to 252 residues: 5'-nucleotidase SurE (252 aa).

Positions 8, 9, 39, and 95 each coordinate a divalent metal cation.

The protein belongs to the SurE nucleotidase family. Requires a divalent metal cation as cofactor.

It is found in the cytoplasm. It catalyses the reaction a ribonucleoside 5'-phosphate + H2O = a ribonucleoside + phosphate. Nucleotidase that shows phosphatase activity on nucleoside 5'-monophosphates. The sequence is that of 5'-nucleotidase SurE from Clostridium botulinum (strain Kyoto / Type A2).